Reading from the N-terminus, the 159-residue chain is Endoribonuclease YbeY (159 aa).

Residues His-117, His-121, and His-127 each contribute to the Zn(2+) site.

Belongs to the endoribonuclease YbeY family. Zn(2+) serves as cofactor.

It localises to the cytoplasm. Single strand-specific metallo-endoribonuclease involved in late-stage 70S ribosome quality control and in maturation of the 3' terminus of the 16S rRNA. The sequence is that of Endoribonuclease YbeY from Azorhizobium caulinodans (strain ATCC 43989 / DSM 5975 / JCM 20966 / LMG 6465 / NBRC 14845 / NCIMB 13405 / ORS 571).